Reading from the N-terminus, the 40-residue chain is Natriuretic peptide HsNP-b (40 aa).

A propeptide spanning residues 1–8 is cleaved from the precursor; that stretch reads SGSKTAKI. The segment at 1–40 is disordered; it reads SGSKTAKIGDGCFGVPIDHIGSTTDLGCGRPRPKPTPRGS. A disulfide bridge links C12 with C28. Basic residues predominate over residues 31-40; it reads PRPKPTPRGS.

This sequence belongs to the natriuretic peptide family. As to expression, expressed by the venom gland.

It is found in the secreted. Functionally, snake venom natriuretic peptide that targets both NPR1 and NPR2. Exhibits hypotensive and vasodepressor activities. The chain is Natriuretic peptide HsNP-b from Hoplocephalus stephensii (Stephens's banded snake).